The following is a 154-amino-acid chain: AP-1 complex subunit sigma-3 (154 aa).

Belongs to the adaptor complexes small subunit family. Adaptor protein complex 1 (AP-1) is a heterotetramer composed of two large adaptins (gamma-type subunit AP1G1 and beta-type subunit AP1B1), a medium adaptin (mu-type subunit AP1M1 or AP1M2) and a small adaptin (sigma-type subunit AP1S1 or AP1S2 or AP1S3). As to expression, widely expressed.

The protein resides in the golgi apparatus. It localises to the cytoplasmic vesicle membrane. The protein localises to the membrane. Its subcellular location is the clathrin-coated pit. Functionally, subunit of clathrin-associated adaptor protein complex 1 that plays a role in protein sorting in the late-Golgi/trans-Golgi network (TGN) and/or endosomes. The AP complexes mediate both the recruitment of clathrin to membranes and the recognition of sorting signals within the cytosolic tails of transmembrane cargo molecules. Involved in TLR3 trafficking. This chain is AP-1 complex subunit sigma-3 (AP1S3), found in Homo sapiens (Human).